A 436-amino-acid chain; its full sequence is UDP-N-acetylmuramate--L-alanine ligase (436 aa).

111-117 (GTHGKTS) serves as a coordination point for ATP.

Belongs to the MurCDEF family.

It localises to the cytoplasm. The catalysed reaction is UDP-N-acetyl-alpha-D-muramate + L-alanine + ATP = UDP-N-acetyl-alpha-D-muramoyl-L-alanine + ADP + phosphate + H(+). The protein operates within cell wall biogenesis; peptidoglycan biosynthesis. Functionally, cell wall formation. In Pediococcus pentosaceus (strain ATCC 25745 / CCUG 21536 / LMG 10740 / 183-1w), this protein is UDP-N-acetylmuramate--L-alanine ligase.